A 351-amino-acid chain; its full sequence is tRNA (guanine(26)-N(2))-dimethyltransferase (351 aa).

One can recognise a Trm1 methyltransferase domain in the interval 4 to 350; the sequence is VLRREGAVQF…AGYGEVKRAL (347 aa). S-adenosyl-L-methionine-binding residues include R39, R65, D83, D109, and A110.

The protein belongs to the class I-like SAM-binding methyltransferase superfamily. Trm1 family.

It catalyses the reaction guanosine(26) in tRNA + 2 S-adenosyl-L-methionine = N(2)-dimethylguanosine(26) in tRNA + 2 S-adenosyl-L-homocysteine + 2 H(+). In terms of biological role, dimethylates a single guanine residue at position 26 of a number of tRNAs using S-adenosyl-L-methionine as donor of the methyl groups. The protein is tRNA (guanine(26)-N(2))-dimethyltransferase of Pyrobaculum neutrophilum (strain DSM 2338 / JCM 9278 / NBRC 100436 / V24Sta) (Thermoproteus neutrophilus).